We begin with the raw amino-acid sequence, 271 residues long: MNAIVIAMMANLYAEPDLHAELVDEILYGMPVQIIEELENDWLYVRTAYRYEGYCQRNDVLFDDAITNTWIQKAQHVIGQRFADVLQEPKIQSTKIITLVKGSILYNVDSDTTSNTPWTAVQLATGEIGYLRSQWLHPKIAEHTFEEHAFRENVVQTALSYIATPYRWGGKSPLGIDCSGLCSMAYLLNGVIIFRDARIVEGFPIKEITIDRMQKGDLLFFPGHVALYLGQTLYVHASLGGNEVNVNSLDEQHPLYRQDLATTITAIGSLF.

2 SH3b domains span residues 1 to 64 (MNAI…LFDD) and 72 to 140 (QKAQ…HPKI). The 121-residue stretch at 148-268 (HAFRENVVQT…DLATTITAIG (121 aa)) folds into the NlpC/P60 domain. Cys178 functions as the Nucleophile in the catalytic mechanism. Residue His224 is the Proton acceptor of the active site. The active site involves His236.

This sequence belongs to the peptidase C40 family.

Its subcellular location is the cytoplasm. In terms of biological role, involved in cell sporulation. Hydrolyzes gamma-D-Glu-L-(meso)A2pm linkages only in those peptide units that have a free N-terminal L-alanine. This is Dipeptidyl-peptidase 6 from Lysinibacillus sphaericus (Bacillus sphaericus).